A 61-amino-acid chain; its full sequence is Small ribosomal subunit protein uS14 (61 aa).

Residues cysteine 24, cysteine 27, cysteine 40, and cysteine 43 each contribute to the Zn(2+) site.

This sequence belongs to the universal ribosomal protein uS14 family. Zinc-binding uS14 subfamily. Part of the 30S ribosomal subunit. Contacts proteins S3 and S10. Zn(2+) serves as cofactor.

Functionally, binds 16S rRNA, required for the assembly of 30S particles and may also be responsible for determining the conformation of the 16S rRNA at the A site. In Borrelia duttonii (strain Ly), this protein is Small ribosomal subunit protein uS14.